We begin with the raw amino-acid sequence, 366 residues long: Anhydro-N-acetylmuramic acid kinase (366 aa).

Residue 12–19 participates in ATP binding; the sequence is GTSLDGID.

Belongs to the anhydro-N-acetylmuramic acid kinase family.

It catalyses the reaction 1,6-anhydro-N-acetyl-beta-muramate + ATP + H2O = N-acetyl-D-muramate 6-phosphate + ADP + H(+). It functions in the pathway amino-sugar metabolism; 1,6-anhydro-N-acetylmuramate degradation. It participates in cell wall biogenesis; peptidoglycan recycling. Functionally, catalyzes the specific phosphorylation of 1,6-anhydro-N-acetylmuramic acid (anhMurNAc) with the simultaneous cleavage of the 1,6-anhydro ring, generating MurNAc-6-P. Is required for the utilization of anhMurNAc either imported from the medium or derived from its own cell wall murein, and thus plays a role in cell wall recycling. The polypeptide is Anhydro-N-acetylmuramic acid kinase (Nitrosospira multiformis (strain ATCC 25196 / NCIMB 11849 / C 71)).